A 597-amino-acid polypeptide reads, in one-letter code: Cell division cycle protein 23 homolog (597 aa).

Ala-2 carries the N-acetylalanine modification. TPR repeat units lie at residues 27 to 63, 73 to 112, and 114 to 144; these read SDLR…FSLP, PPPI…CNSK, and AYFL…LEKG. Lys-147 participates in a covalent cross-link: Glycyl lysine isopeptide (Lys-Gly) (interchain with G-Cter in SUMO2). TPR repeat units lie at residues 169-200, 229-259, 263-293, 297-327, 331-361, 366-395, 400-432, and 433-466; these read GFGL…HVLP, MKEF…DVGF, SYIV…RKQD, IENM…CEID, VETC…LKLN, GAWT…IEVN, RAWY…RPND, and SRML…GDVE. Tyr-273 is subject to Phosphotyrosine. N6-acetyllysine is present on Lys-467. 2 TPR repeats span residues 468-500 and 504-540; these read MALV…IYSC and VEHL…CAFN. Thr-562 and Thr-565 each carry phosphothreonine. A Phosphoserine modification is found at Ser-578. Thr-582 bears the Phosphothreonine mark. Ser-588 and Ser-593 each carry phosphoserine. At Thr-596 the chain carries Phosphothreonine.

It belongs to the APC8/CDC23 family. The mammalian APC/C is composed at least of 14 distinct subunits ANAPC1, ANAPC2, CDC27/APC3, ANAPC4, ANAPC5, CDC16/APC6, ANAPC7, CDC23/APC8, ANAPC10, ANAPC11, CDC26/APC12, ANAPC13, ANAPC15 and ANAPC16 that assemble into a complex of at least 19 chains with a combined molecular mass of around 1.2 MDa; APC/C interacts with FZR1 and FBXO5. Interacts with FBXO43; the interaction is direct. Post-translationally, phosphorylated. Phosphorylation on Thr-562 occurs specifically during mitosis.

Its pathway is protein modification; protein ubiquitination. Functionally, component of the anaphase promoting complex/cyclosome (APC/C), a cell cycle-regulated E3 ubiquitin ligase that controls progression through mitosis and the G1 phase of the cell cycle. The APC/C complex acts by mediating ubiquitination and subsequent degradation of target proteins: it mainly mediates the formation of 'Lys-11'-linked polyubiquitin chains and, to a lower extent, the formation of 'Lys-48'- and 'Lys-63'-linked polyubiquitin chains. The APC/C complex catalyzes assembly of branched 'Lys-11'-/'Lys-48'-linked branched ubiquitin chains on target proteins. In Homo sapiens (Human), this protein is Cell division cycle protein 23 homolog (CDC23).